A 309-amino-acid polypeptide reads, in one-letter code: Integral membrane protein sed5 (309 aa).

The Cytoplasmic portion of the chain corresponds to 1-288; sequence MSFQDRTAEF…KFYERMSSNR (288 aa). The stretch at 37–66 forms a coiled coil; it reads KHQKSEFTRIAQKIANQINQTGEKLQKLSQ. The t-SNARE coiled-coil homology domain occupies 218–280; the sequence is DTYSQQRMSS…GSAQREIVKF (63 aa). The helical; Anchor for type IV membrane protein transmembrane segment at 289–308 threads the bilayer; the sequence is ALLFKIFGIVIIFFLLWVLV. Position 309 (threonine 309) is a topological domain, vesicular.

It belongs to the syntaxin family.

The protein resides in the membrane. The protein localises to the golgi apparatus membrane. In terms of biological role, required for vesicular transport between the endoplasmic reticulum and the Golgi complex. Acts as a target organelle soluble NSF attachment protein receptor (t-SNARE). The polypeptide is Integral membrane protein sed5 (sed5) (Schizosaccharomyces pombe (strain 972 / ATCC 24843) (Fission yeast)).